The following is a 251-amino-acid chain: Hydroxyacylglutathione hydrolase (251 aa).

7 residues coordinate Zn(2+): H53, H55, D57, H58, H110, D127, and H165.

It belongs to the metallo-beta-lactamase superfamily. Glyoxalase II family. As to quaternary structure, monomer. Zn(2+) is required as a cofactor.

It carries out the reaction an S-(2-hydroxyacyl)glutathione + H2O = a 2-hydroxy carboxylate + glutathione + H(+). It functions in the pathway secondary metabolite metabolism; methylglyoxal degradation; (R)-lactate from methylglyoxal: step 2/2. Functionally, thiolesterase that catalyzes the hydrolysis of S-D-lactoyl-glutathione to form glutathione and D-lactic acid. In Escherichia coli O81 (strain ED1a), this protein is Hydroxyacylglutathione hydrolase.